The chain runs to 359 residues: Guanine nucleotide-binding protein G(q) subunit alpha (359 aa).

S-palmitoyl cysteine attachment occurs at residues cysteine 9 and cysteine 10. A G-alpha domain is found at 38-359 (RELKLLLLGT…QLNLKEYNLV (322 aa)). The tract at residues 41-54 (KLLLLGTGESGKST) is G1 motif. Residues serine 50, glycine 51, lysine 52, serine 53, threonine 54, serine 156, leucine 180, arginine 181, and arginine 183 each contribute to the GTP site. Serine 53 lines the Mg(2+) pocket. Residues 178–186 (DVLRVRVPT) are G2 motif. Mg(2+) is bound at residue threonine 186. Positions 201 to 210 (FRMVDVGGQR) are G3 motif. Residue glutamine 209 is modified to 5-glutamyl histamine. Residues 270 to 277 (ILFLNKKD) form a G4 motif region. Asparagine 274, lysine 275, aspartate 277, and alanine 331 together coordinate GTP. A G5 motif region spans residues 329–334 (TCATDT).

This sequence belongs to the G-alpha family. G(q) subfamily. As to quaternary structure, g proteins are composed of 3 units; alpha, beta and gamma. The alpha chain contains the guanine nucleotide binding site. Interacts (GDP-bound form) with RIC8A (via C-terminus); promoting GNAQ folding and association with the plasma membrane. Binds NHERF1. Forms a complex with PECAM1 and BDKRB2. Interacts with GAS2L2. Palmitoylated by ZDHHC3 and ZDHHC7. Palmitoylation occurs in the Golgi and participates in the localization of GNAQ to the plasma membrane. Post-translationally, histaminylated at Gln-209 residues by TGM2.

It is found in the cell membrane. Its subcellular location is the golgi apparatus. It localises to the nucleus. The protein resides in the nucleus membrane. The catalysed reaction is GTP + H2O = GDP + phosphate + H(+). Functionally, guanine nucleotide-binding proteins (G proteins) function as transducers downstream of G protein-coupled receptors (GPCRs) in numerous signaling cascades. The alpha chain contains the guanine nucleotide binding site and alternates between an active, GTP-bound state and an inactive, GDP-bound state. Signaling by an activated GPCR promotes GDP release and GTP binding. The alpha subunit has a low GTPase activity that converts bound GTP to GDP, thereby terminating the signal. Both GDP release and GTP hydrolysis are modulated by numerous regulatory proteins. Signaling is mediated via phospholipase C-beta-dependent inositol lipid hydrolysis for signal propagation: activates phospholipase C-beta: following GPCR activation, GNAQ activates PLC-beta (PLCB1, PLCB2, PLCB3 or PLCB4), leading to production of diacylglycerol (DAG) and inositol 1,4,5-trisphosphate (IP3). Required for platelet activation. Regulates B-cell selection and survival and is required to prevent B-cell-dependent autoimmunity. Regulates chemotaxis of BM-derived neutrophils and dendritic cells (in vitro). Transduces FFAR4 signaling in response to long-chain fatty acids (LCFAs). Together with GNA11, required for heart development. The sequence is that of Guanine nucleotide-binding protein G(q) subunit alpha (Gnaq) from Rattus norvegicus (Rat).